The primary structure comprises 238 residues: 1-(5-phosphoribosyl)-5-[(5-phosphoribosylamino)methylideneamino] imidazole-4-carboxamide isomerase (238 aa).

Aspartate 8 serves as the catalytic Proton acceptor. Catalysis depends on aspartate 129, which acts as the Proton donor.

This sequence belongs to the HisA/HisF family.

The protein localises to the cytoplasm. The enzyme catalyses 1-(5-phospho-beta-D-ribosyl)-5-[(5-phospho-beta-D-ribosylamino)methylideneamino]imidazole-4-carboxamide = 5-[(5-phospho-1-deoxy-D-ribulos-1-ylimino)methylamino]-1-(5-phospho-beta-D-ribosyl)imidazole-4-carboxamide. It functions in the pathway amino-acid biosynthesis; L-histidine biosynthesis; L-histidine from 5-phospho-alpha-D-ribose 1-diphosphate: step 4/9. The protein is 1-(5-phosphoribosyl)-5-[(5-phosphoribosylamino)methylideneamino] imidazole-4-carboxamide isomerase of Brachyspira hyodysenteriae (strain ATCC 49526 / WA1).